A 267-amino-acid chain; its full sequence is Type III pantothenate kinase (267 aa).

An ATP-binding site is contributed by 6 to 13 (DSGNSRLK). Substrate is bound by residues Tyr96 and 103 to 106 (GADR). The Proton acceptor role is filled by Asp105. Residue Thr131 participates in ATP binding. Thr181 serves as a coordination point for substrate.

This sequence belongs to the type III pantothenate kinase family. In terms of assembly, homodimer. NH4(+) is required as a cofactor. Requires K(+) as cofactor.

Its subcellular location is the cytoplasm. The catalysed reaction is (R)-pantothenate + ATP = (R)-4'-phosphopantothenate + ADP + H(+). The protein operates within cofactor biosynthesis; coenzyme A biosynthesis; CoA from (R)-pantothenate: step 1/5. Its function is as follows. Catalyzes the phosphorylation of pantothenate (Pan), the first step in CoA biosynthesis. The polypeptide is Type III pantothenate kinase (Bordetella bronchiseptica (strain ATCC BAA-588 / NCTC 13252 / RB50) (Alcaligenes bronchisepticus)).